The following is a 254-amino-acid chain: Large ribosomal subunit protein uL4 (254 aa).

The disordered stretch occupies residues 45 to 70 (PWGNDPEAGKRTSAKGWGSGRGTARV).

Belongs to the universal ribosomal protein uL4 family. As to quaternary structure, part of the 50S ribosomal subunit.

Its function is as follows. One of the primary rRNA binding proteins, this protein initially binds near the 5'-end of the 23S rRNA. It is important during the early stages of 50S assembly. It makes multiple contacts with different domains of the 23S rRNA in the assembled 50S subunit and ribosome. In terms of biological role, forms part of the polypeptide exit tunnel. The chain is Large ribosomal subunit protein uL4 from Methanobrevibacter smithii (strain ATCC 35061 / DSM 861 / OCM 144 / PS).